We begin with the raw amino-acid sequence, 207 residues long: MLEHFRAGWAKVMNPIADALLRAHVTPDVVTWIGTIGAVLMALICFPQGWLWQGPWLVTLFIFSDSLDGNMARKLGRHSQWGSFLDSTLDRFGDAAIFTGVALYFAGPGNSVLWTAMACAALVFGMATSYVRAKAESLALEAKVGIATRADRLLVSLVAIEITGLARVGAFPHWCVVALPIALCYLTLAGAITVVQRMVAVRRACES.

2 helical membrane passes run 21 to 44 (LRAH…MALI) and 50 to 67 (WLWQ…SDSL). 28–31 (DVVT) contacts a CDP-1,2-diacyl-sn-glycerol. Mg(2+)-binding residues include aspartate 65 and aspartate 68. The a CDP-1,2-diacyl-sn-glycerol site is built by glycine 69, arginine 73, and serine 79. Mg(2+)-binding residues include aspartate 86 and aspartate 90. A run of 4 helical transmembrane segments spans residues 88 to 106 (TLDR…LYFA), 112 to 131 (VLWT…TSYV), 152 to 170 (RLLV…RVGA), and 176 to 195 (VVAL…ITVV). The active-site Proton acceptor is the aspartate 90.

This sequence belongs to the CDP-alcohol phosphatidyltransferase class-I family. In terms of assembly, homodimer. It depends on Mg(2+) as a cofactor.

Its subcellular location is the cell membrane. The catalysed reaction is a CDP-1,2-diacyl-sn-glycerol + 1D-myo-inositol 3-phosphate = a 1,2-diacyl-sn-glycero-3-phospho-(1D-myo-inositol-3-phosphate) + CMP + H(+). The enzyme catalyses 1,2-di-(9Z-octadecenoyl)-sn-glycero-3-cytidine-5'-diphosphate + 1D-myo-inositol 3-phosphate = 1,2-di-(9Z-octadecenoyl)-sn-glycero-3-phospho-(1D-myo-inositol-3-phosphate) + CMP + H(+). Its pathway is phospholipid metabolism; phosphatidylinositol phosphate biosynthesis. Its function is as follows. Catalyzes the conjugation of the 1'-hydroxyl group of D-myo-inositol-3-phosphate (also named L-myo-inositol-1-phosphate) with a lipid tail of cytidine diphosphate diacylglycerol (CDP-DAG), forming phosphatidylinositol phosphate (PIP) and CMP. PIP is a precursor of phosphatidylinositol (PI) which is an essential lipid required for cell wall formation. This Cutibacterium acnes (strain DSM 16379 / KPA171202) (Propionibacterium acnes) protein is Phosphatidylinositol phosphate synthase.